The sequence spans 393 residues: Na(+)/H(+) antiporter NhaA (393 aa).

The next 12 membrane-spanning stretches (helical) occupy residues 23-43, 58-78, 96-116, 126-146, 155-175, 178-198, 201-221, 224-244, 265-285, 298-318, 334-354, and 367-387; these read AGGI…NSPF, LSLA…LVGL, MLPG…FAVL, GWAV…SLLG, VFLA…IAIF, AEIS…LFVM, MGVV…FFVF, GVHA…KPAP, VAFI…FKGL, ILLG…WLAI, LYGV…IGLL, and IGVL…LRAA.

It belongs to the NhaA Na(+)/H(+) (TC 2.A.33) antiporter family.

The protein resides in the cell inner membrane. It catalyses the reaction Na(+)(in) + 2 H(+)(out) = Na(+)(out) + 2 H(+)(in). In terms of biological role, na(+)/H(+) antiporter that extrudes sodium in exchange for external protons. The chain is Na(+)/H(+) antiporter NhaA from Brucella suis (strain ATCC 23445 / NCTC 10510).